The chain runs to 353 residues: UDP-3-O-acylglucosamine N-acyltransferase (353 aa).

The active-site Proton acceptor is His-242.

Belongs to the transferase hexapeptide repeat family. LpxD subfamily. Homotrimer.

It carries out the reaction a UDP-3-O-[(3R)-3-hydroxyacyl]-alpha-D-glucosamine + a (3R)-hydroxyacyl-[ACP] = a UDP-2-N,3-O-bis[(3R)-3-hydroxyacyl]-alpha-D-glucosamine + holo-[ACP] + H(+). Its pathway is bacterial outer membrane biogenesis; LPS lipid A biosynthesis. Its function is as follows. Catalyzes the N-acylation of UDP-3-O-acylglucosamine using 3-hydroxyacyl-ACP as the acyl donor. Is involved in the biosynthesis of lipid A, a phosphorylated glycolipid that anchors the lipopolysaccharide to the outer membrane of the cell. This is UDP-3-O-acylglucosamine N-acyltransferase from Pseudomonas aeruginosa (strain LESB58).